Reading from the N-terminus, the 146-residue chain is Non-structural protein 5 (146 aa).

Residues 36–56 traverse the membrane as a helical segment; that stretch reads ALGLGCLACGIVGVLVVAGGL.

The protein belongs to the aquareoviridae NS5 protein family.

Its subcellular location is the host membrane. This chain is Non-structural protein 5 (S7), found in Aquareovirus C (isolate Golden shiner/USA/GSRV/1977) (AQRV-C).